A 535-amino-acid chain; its full sequence is PAC-1 interacting and coiled-coil domain-containing protein 1 (535 aa).

A disordered region spans residues 1–67; that stretch reads MIITTPRRAN…KQTPPRSPVI (67 aa). Residues 36–57 show a composition bias toward low complexity; that stretch reads SSTTPSSIGSSSSSSSSYASST. 2 coiled-coil regions span residues 109 to 172 and 198 to 242; these read KLQY…RDLS and SLMK…RQSL. Disordered stretches follow at residues 254–277 and 503–535; these read NESEDLGCGSSEQSGGSEGHNDEE and TCRPTTTLISSTQPAQRSVSVEKNNNNNVHTHN. Over residues 503-525 the composition is skewed to polar residues; sequence TCRPTTTLISSTQPAQRSVSVEK. A compositionally biased stretch (low complexity) spans 526-535; it reads NNNNNVHTHN.

It belongs to the CCDC85 family. As to quaternary structure, interacts with pac-1 and jac-1.

Its subcellular location is the cell junction. The protein resides in the adherens junction. Linker protein which helps to recruit the Rho GTPase-activating protein, pac-1, to adherens junctions. The chain is PAC-1 interacting and coiled-coil domain-containing protein 1 from Caenorhabditis elegans.